Here is an 82-residue protein sequence, read N- to C-terminus: Small ribosomal subunit protein bS16 (82 aa).

The protein belongs to the bacterial ribosomal protein bS16 family.

The sequence is that of Small ribosomal subunit protein bS16 from Actinobacillus pleuropneumoniae serotype 5b (strain L20).